A 99-amino-acid polypeptide reads, in one-letter code: DNA-binding protein Fis (99 aa).

Positions 75–94 (QTRAATMLGINRGTLRKKLK) form a DNA-binding region, H-T-H motif.

It belongs to the transcriptional regulatory Fis family. In terms of assembly, homodimer.

Functionally, activates ribosomal RNA transcription. Plays a direct role in upstream activation of rRNA promoters. The polypeptide is DNA-binding protein Fis (Pasteurella multocida (strain Pm70)).